A 351-amino-acid polypeptide reads, in one-letter code: DNA polymerase IV (351 aa).

In terms of domain architecture, UmuC spans I4–G185. Mg(2+) contacts are provided by D8 and D103. The active site involves E104.

This sequence belongs to the DNA polymerase type-Y family. In terms of assembly, monomer. The cofactor is Mg(2+).

The protein resides in the cytoplasm. It catalyses the reaction DNA(n) + a 2'-deoxyribonucleoside 5'-triphosphate = DNA(n+1) + diphosphate. Functionally, poorly processive, error-prone DNA polymerase involved in untargeted mutagenesis. Copies undamaged DNA at stalled replication forks, which arise in vivo from mismatched or misaligned primer ends. These misaligned primers can be extended by PolIV. Exhibits no 3'-5' exonuclease (proofreading) activity. May be involved in translesional synthesis, in conjunction with the beta clamp from PolIII. This Salmonella arizonae (strain ATCC BAA-731 / CDC346-86 / RSK2980) protein is DNA polymerase IV.